Consider the following 117-residue polypeptide: Hemerythrin subunit alpha (117 aa).

The Fe cation site is built by His-24, His-53, Glu-57, His-72, His-76, His-105, and Asp-110.

Belongs to the hemerythrin family. Octamer composed of two types of chains: alpha and beta.

Hemerythrin is a respiratory protein in blood cells of certain marine worms. The oxygen-binding site in each chain contains two iron atoms. The chain is Hemerythrin subunit alpha from Lingula anatina (Brachiopod).